Reading from the N-terminus, the 485-residue chain is uncharacterized protein (485 aa).

It localises to the virion. This is an uncharacterized protein from Acanthamoeba polyphaga mimivirus (APMV).